A 165-amino-acid chain; its full sequence is UBA-like domain-containing protein 2-B (165 aa).

Residues 119-165 (QQPVWLPPASPTAHLHHHHHHPQPVWPPNSQPTGGPQKAMAAMDGQR) are disordered.

The protein belongs to the UBALD family.

The protein is UBA-like domain-containing protein 2-B (ubald2-b) of Xenopus laevis (African clawed frog).